A 318-amino-acid chain; its full sequence is Oxygen-evolving enhancer protein 1, chloroplastic (318 aa).

The signal sequence occupies residues 1–18 (MKAVIAVFITLMLTAVVA). A helical transmembrane segment spans residues 45–65 (AAAAALAALTTLSVISPSFAI).

It belongs to the PsbO family.

It is found in the plastid. Its subcellular location is the chloroplast thylakoid membrane. In terms of biological role, stabilizes the manganese cluster which is the primary site of water splitting. The sequence is that of Oxygen-evolving enhancer protein 1, chloroplastic from Chattonella marina var. antiqua (Red tide flagellate).